The following is a 343-amino-acid chain: Aspartate carbamoyltransferase catalytic subunit (343 aa).

Arginine 91 and threonine 92 together coordinate carbamoyl phosphate. Position 119 (lysine 119) interacts with L-aspartate. Carbamoyl phosphate is bound by residues arginine 141, histidine 171, and glutamine 174. Residues arginine 204 and arginine 259 each contribute to the L-aspartate site. Glycine 300 and proline 301 together coordinate carbamoyl phosphate.

The protein belongs to the aspartate/ornithine carbamoyltransferase superfamily. ATCase family. In terms of assembly, heterododecamer (2C3:3R2) of six catalytic PyrB chains organized as two trimers (C3), and six regulatory PyrI chains organized as three dimers (R2).

The enzyme catalyses carbamoyl phosphate + L-aspartate = N-carbamoyl-L-aspartate + phosphate + H(+). Its pathway is pyrimidine metabolism; UMP biosynthesis via de novo pathway; (S)-dihydroorotate from bicarbonate: step 2/3. Its function is as follows. Catalyzes the condensation of carbamoyl phosphate and aspartate to form carbamoyl aspartate and inorganic phosphate, the committed step in the de novo pyrimidine nucleotide biosynthesis pathway. This Burkholderia orbicola (strain MC0-3) protein is Aspartate carbamoyltransferase catalytic subunit.